An 86-amino-acid polypeptide reads, in one-letter code: Short neurotoxin homolog NTL4 (86 aa).

The signal sequence occupies residues 1–21 (MKTLLLTLVVVTIICLDLGYT). Disulfide bonds link Cys24/Cys45, Cys38/Cys63, Cys67/Cys78, and Cys79/Cys84.

Belongs to the three-finger toxin family. Short-chain subfamily. Orphan group III sub-subfamily. In terms of tissue distribution, expressed by the venom gland.

It is found in the secreted. The chain is Short neurotoxin homolog NTL4 from Bungarus multicinctus (Many-banded krait).